Here is a 59-residue protein sequence, read N- to C-terminus: UPF0181 protein YoaH (59 aa).

The protein belongs to the UPF0181 family.

The sequence is that of UPF0181 protein YoaH from Salmonella arizonae (strain ATCC BAA-731 / CDC346-86 / RSK2980).